Consider the following 145-residue polypeptide: Small ribosomal subunit protein bS6 (145 aa).

It belongs to the bacterial ribosomal protein bS6 family.

Binds together with bS18 to 16S ribosomal RNA. This Mycoplasmopsis agalactiae (strain NCTC 10123 / CIP 59.7 / PG2) (Mycoplasma agalactiae) protein is Small ribosomal subunit protein bS6.